Consider the following 378-residue polypeptide: Protein RecA (378 aa).

Residue 79-86 coordinates ATP; it reads GPESSGKT.

Belongs to the RecA family.

It localises to the cytoplasm. Its function is as follows. Can catalyze the hydrolysis of ATP in the presence of single-stranded DNA, the ATP-dependent uptake of single-stranded DNA by duplex DNA, and the ATP-dependent hybridization of homologous single-stranded DNAs. It interacts with LexA causing its activation and leading to its autocatalytic cleavage. This is Protein RecA from Streptococcus equi subsp. zooepidemicus (strain MGCS10565).